The primary structure comprises 186 residues: MAQVELILLQRVEHLGQMGEVVKVKPGYARNFLLPQAKAVRATKQNRERFERERAHLEAQNLKRREEAERVAERVAGLTVTLIRQASDAGSLYGSVTSRDIADACGEASLGITRSQVLLVHPIKTLGLATVRVALHPEVLIDVVVNVARSPEEAEKQARGEAIMREESEYELETGEEVAEGPEQTA.

Positions 151-167 (PEEAEKQARGEAIMREE) are enriched in basic and acidic residues. A disordered region spans residues 151-186 (PEEAEKQARGEAIMREESEYELETGEEVAEGPEQTA). Residues 168–180 (SEYELETGEEVAE) are compositionally biased toward acidic residues.

The protein belongs to the bacterial ribosomal protein bL9 family.

Its function is as follows. Binds to the 23S rRNA. This is Large ribosomal subunit protein bL9 from Acidiphilium cryptum (strain JF-5).